A 311-amino-acid polypeptide reads, in one-letter code: Aspartate carbamoyltransferase catalytic subunit (311 aa).

The carbamoyl phosphate site is built by Arg-55 and Thr-56. Lys-85 is an L-aspartate binding site. Residues Arg-106, His-135, and Gln-138 each coordinate carbamoyl phosphate. L-aspartate-binding residues include Arg-168 and Arg-230. Residues Leu-268 and Pro-269 each coordinate carbamoyl phosphate.

This sequence belongs to the aspartate/ornithine carbamoyltransferase superfamily. ATCase family. As to quaternary structure, heterododecamer (2C3:3R2) of six catalytic PyrB chains organized as two trimers (C3), and six regulatory PyrI chains organized as three dimers (R2).

The enzyme catalyses carbamoyl phosphate + L-aspartate = N-carbamoyl-L-aspartate + phosphate + H(+). It functions in the pathway pyrimidine metabolism; UMP biosynthesis via de novo pathway; (S)-dihydroorotate from bicarbonate: step 2/3. Functionally, catalyzes the condensation of carbamoyl phosphate and aspartate to form carbamoyl aspartate and inorganic phosphate, the committed step in the de novo pyrimidine nucleotide biosynthesis pathway. The protein is Aspartate carbamoyltransferase catalytic subunit of Pectobacterium atrosepticum (strain SCRI 1043 / ATCC BAA-672) (Erwinia carotovora subsp. atroseptica).